Here is a 561-residue protein sequence, read N- to C-terminus: Putative cysteine ligase BshC (561 aa).

Positions 472–517 (LAQSVEKVMQSTLNQVENLKSKTIKAEKQRHNDLIAQIEKSRDNLL) form a coiled coil.

The protein belongs to the BshC family.

In Chloroherpeton thalassium (strain ATCC 35110 / GB-78), this protein is Putative cysteine ligase BshC.